The following is a 276-amino-acid chain: Putative metal-binding protein CT_415 (276 aa).

The first 18 residues, 1-18, serve as a signal peptide directing secretion; it reads MRLLFLLLFSLGITCSYG. A divalent metal cation-binding residues include histidine 59, histidine 121, histidine 185, and aspartate 256.

Belongs to the bacterial solute-binding protein 9 family.

It is found in the periplasm. Its function is as follows. Part of an ATP-binding cassette (ABC) transport system involved in metal import. Binds a metal with high affinity and specificity and delivers it to the membrane permease for translocation into the cytoplasm. The polypeptide is Putative metal-binding protein CT_415 (Chlamydia trachomatis serovar D (strain ATCC VR-885 / DSM 19411 / UW-3/Cx)).